A 248-amino-acid polypeptide reads, in one-letter code: 3-deoxy-manno-octulosonate cytidylyltransferase (248 aa).

The protein belongs to the KdsB family.

The protein localises to the cytoplasm. It carries out the reaction 3-deoxy-alpha-D-manno-oct-2-ulosonate + CTP = CMP-3-deoxy-beta-D-manno-octulosonate + diphosphate. The protein operates within nucleotide-sugar biosynthesis; CMP-3-deoxy-D-manno-octulosonate biosynthesis; CMP-3-deoxy-D-manno-octulosonate from 3-deoxy-D-manno-octulosonate and CTP: step 1/1. Its pathway is bacterial outer membrane biogenesis; lipopolysaccharide biosynthesis. Functionally, activates KDO (a required 8-carbon sugar) for incorporation into bacterial lipopolysaccharide in Gram-negative bacteria. The polypeptide is 3-deoxy-manno-octulosonate cytidylyltransferase (Salmonella dublin (strain CT_02021853)).